We begin with the raw amino-acid sequence, 543 residues long: uncharacterized protein (543 aa).

The next 6 helical transmembrane spans lie at 47-67, 79-99, 126-146, 176-196, 198-218, and 249-269; these read FSLL…PSLV, GGMV…AFAL, AFLS…GFAS, IYVA…KFLA, FSSF…ISLA, and FILC…CATI. N-linked (GlcNAc...) asparagine glycosylation occurs at asparagine 275. 3 helical membrane-spanning segments follow: residues 282–302, 335–355, and 384–404; these read IAII…MITI, AVGV…ALCL, and IPLN…LLML. N-linked (GlcNAc...) asparagine glycosylation is present at asparagine 406. Transmembrane regions (helical) follow at residues 410–430, 452–472, and 480–500; these read ISSI…LPLV, ISIV…FPSY, and MNWA…YYYL. Asparagine 519 is a glycosylation site (N-linked (GlcNAc...) asparagine).

It belongs to the amino acid-polyamine-organocation (APC) superfamily.

Its subcellular location is the membrane. This is an uncharacterized protein from Schizosaccharomyces pombe (strain 972 / ATCC 24843) (Fission yeast).